The sequence spans 161 residues: Nucleoside diphosphate kinase (161 aa).

Residues lysine 13, phenylalanine 61, arginine 89, threonine 95, arginine 106, and asparagine 116 each coordinate ATP. Histidine 119 acts as the Pros-phosphohistidine intermediate in catalysis.

It belongs to the NDK family. It depends on Mg(2+) as a cofactor.

The protein resides in the cytoplasm. It catalyses the reaction a 2'-deoxyribonucleoside 5'-diphosphate + ATP = a 2'-deoxyribonucleoside 5'-triphosphate + ADP. The enzyme catalyses a ribonucleoside 5'-diphosphate + ATP = a ribonucleoside 5'-triphosphate + ADP. Functionally, major role in the synthesis of nucleoside triphosphates other than ATP. The ATP gamma phosphate is transferred to the NDP beta phosphate via a ping-pong mechanism, using a phosphorylated active-site intermediate. This chain is Nucleoside diphosphate kinase, found in Halobacterium salinarum (strain ATCC 29341 / DSM 671 / R1).